The primary structure comprises 585 residues: Suppressor of mec-8 and unc-52 protein homolog 2 (585 aa).

Basic residues predominate over residues 1-14; the sequence is MKPSKSHHKEKTAR. Disordered regions lie at residues 1–52 and 219–324; these read MKPS…SSFH and KKKK…PRDK. A compositionally biased stretch (basic and acidic residues) spans 15–39; that stretch reads RREEKLEESDNPKYRDRAKERRENQ. R-[ED] repeat units follow at residues 16–17, 29–30, 36–37, and 258–259; these read RE and RD. The span at 276–288 shows a compositional bias: basic and acidic residues; sequence LSTKQEEPPVART. R-[ED] repeat units follow at residues 322 to 323, 436 to 437, 445 to 446, 450 to 451, 540 to 541, and 542 to 543; these read RD and RE. The tract at residues 523–585 is disordered; it reads FQFGVKMQDG…EAQTPKRSKH (63 aa). Positions 530 to 548 are enriched in basic and acidic residues; that stretch reads QDGRKTRKQNRDRDQKLNN. Thr579 is subject to Phosphothreonine.

Belongs to the RED family. In terms of assembly, component of the spliceosome. Interacts with SMU1. As to expression, highly expressed in seedlings at 7 days after germination, young flowers before anthesis and developing siliques. Expressed at lower levels in roots, expanding leaves, open flowers, dry seeds and inflorescences. Not detected in senescing leaves.

The protein localises to the nucleus. Auxiliary spliceosomal protein involved in splicing of specific pre-mRNAs that affect multiple aspects of development. This Arabidopsis thaliana (Mouse-ear cress) protein is Suppressor of mec-8 and unc-52 protein homolog 2 (SMU2).